The sequence spans 391 residues: Phosphoglycerate kinase (391 aa).

Residues 21–23 (DMN), Arg-36, 59–62 (HLGR), Arg-113, and Arg-146 contribute to the substrate site. Residues Lys-197, Glu-319, and 345–348 (GGDT) contribute to the ATP site.

Belongs to the phosphoglycerate kinase family. In terms of assembly, monomer.

It localises to the cytoplasm. The enzyme catalyses (2R)-3-phosphoglycerate + ATP = (2R)-3-phospho-glyceroyl phosphate + ADP. The protein operates within carbohydrate degradation; glycolysis; pyruvate from D-glyceraldehyde 3-phosphate: step 2/5. This is Phosphoglycerate kinase from Chromobacterium violaceum (strain ATCC 12472 / DSM 30191 / JCM 1249 / CCUG 213 / NBRC 12614 / NCIMB 9131 / NCTC 9757 / MK).